A 234-amino-acid chain; its full sequence is STARD3 N-terminal-like protein (234 aa).

The residue at position 1 (M1) is an N-acetylmethionine. Topologically, residues 1–53 (MNHLPEDMENALTGSQSSHASLRNIHSINPTQLMARIESYEGREKKGISDVRR) are cytoplasmic. Phosphoserine is present on residues S15, S21, and S27. The region spanning 48–218 (ISDVRRTFCL…YSPPESEAGS (171 aa)) is the MENTAL domain. A helical membrane pass occupies residues 54–74 (TFCLFVTFDLLFVTLLWIIEL). Residues 75–97 (NVNGGIENTLEKEVMQYDYYSSY) are Extracellular-facing. Residues 98-118 (FDIFLLAVFRFKVLILAYAVC) form a helical membrane-spanning segment. At 119–122 (RLRH) the chain is on the cytoplasmic side. The chain crosses the membrane as a helical span at residues 123–143 (WWAIALTTAVTSAFLLAKVIL). The Extracellular segment spans residues 144 to 150 (SKLFSQG). A helical membrane pass occupies residues 151–171 (AFGYVLPIISFILAWIETWFL). The Cytoplasmic portion of the chain corresponds to 172–234 (DFKVLPQEAE…QDSEKPLLEL (63 aa)). S193 carries the post-translational modification Phosphoserine. The interval 200 to 234 (PGGLSDGQFYSPPESEAGSEEAEEKQDSEKPLLEL) is disordered. Positions 208-213 (FYSPPE) match the FFAT motif. The segment covering 224–234 (KQDSEKPLLEL) has biased composition (basic and acidic residues).

This sequence belongs to the STARD3 family. In terms of assembly, homodimer. Interacts (via the MENTAL domain) with STARD3NL. Interacts (via FFAT motif) with VAPA. Interacts (via FFAT motif) with VAPB. Interacts (via FFAT motif) with MOSPD2 (via MSP domain).

The protein resides in the late endosome membrane. Its function is as follows. Tethering protein that creates contact site between the endoplasmic reticulum and late endosomes: localizes to late endosome membranes and contacts the endoplasmic reticulum via interaction with VAPA and VAPB. This is STARD3 N-terminal-like protein from Homo sapiens (Human).